The following is a 512-amino-acid chain: Kelch repeat protein C2 (512 aa).

In terms of domain architecture, BTB spans 2-67 (ESVIFSINGE…MRWKKINITI (66 aa)). One can recognise a BACK domain in the interval 102-176 (CIRMFNFSKR…LLKWIHKNPN (75 aa)). Kelch repeat units lie at residues 216-261 (IKHN…LHNC), 262-307 (LYII…VNNG), 309-354 (LYVI…FVND), 356-403 (IYVM…EYDG), 405-449 (IYVI…SCGD), and 452-498 (LIIA…THKS).

This sequence belongs to the poxviruses Kelch family.

This is Kelch repeat protein C2 from Rabbitpox virus (strain Utrecht) (RPV).